Reading from the N-terminus, the 125-residue chain is Ribonuclease VapC19 (125 aa).

Residues 3–122 form the PINc domain; the sequence is LIDTTIAVDH…RHFPMFPDLQ (120 aa). Mg(2+)-binding residues include Asp5 and Asp93.

It belongs to the PINc/VapC protein family. Mg(2+) is required as a cofactor.

In terms of biological role, toxic component of a type II toxin-antitoxin (TA) system. An RNase. Its toxic effect is neutralized by coexpression with cognate antitoxin VapB19. In Mycobacterium tuberculosis (strain CDC 1551 / Oshkosh), this protein is Ribonuclease VapC19.